We begin with the raw amino-acid sequence, 1881 residues long: Ankyrin-1 (1881 aa).

An 89 kDa domain region spans residues 1-827; that stretch reads MPYSVGFREA…EDEGEELISF (827 aa). 23 ANK repeats span residues 44–73, 77–106, 110–139, 143–172, 174–201, 205–234, 238–267, 271–300, 304–333, 337–366, 370–399, 403–432, 436–465, 469–498, 502–531, 535–564, 568–597, 601–630, 634–663, 667–696, 700–729, 733–762, and 766–795; these read NGLN…ILET, KGNT…NVNA, KGFT…NQNV, DGFT…KGKV, LPAL…NPDV, TGFT…SVNF, NGIT…QIET, DELT…PIQA, NGLS…EIDD, DHLT…KPNS, NGFT…SIDA, SGLT…SPNV, KVET…KVNA, DDQT…NPNL, AGHT…SQAC, KGFT…HPNA, NGLT…SPHS, NGYT…SANA, QGVT…NGNL, SGLT…MVDA, MGYT…DVNA, LGYS…SPNE, and DGTT…ETSF. Asn105 carries the (3S)-3-hydroxyasparagine; by HIF1AN; partial modification. At Asn233 the chain carries (3S)-3-hydroxyasparagine; by HIF1AN; partial. Residue Ser429 is modified to Phosphoserine. (3S)-3-hydroxyasparagine; by HIF1AN; partial occurs at positions 431 and 464. A (3S)-3-hydroxyasparagine; by HIF1AN; partial mark is found at Asn629 and Asn662. The residue at position 695 (Asp695) is a (3S)-3-hydroxyaspartate; by HIF1AN; partial. Asn728 is modified ((3S)-3-hydroxyasparagine; by HIF1AN; partial). Ser759 is subject to Phosphoserine. Asn761 bears the (3S)-3-hydroxyasparagine; by HIF1AN; partial mark. Phosphoserine occurs at positions 781, 817, 834, and 856. Residues 875–904 form a disordered region; the sequence is EEQEQASKEYDEDSLIPSSPATETSDNISP. A compositionally biased stretch (polar residues) spans 890 to 904; it reads IPSSPATETSDNISP. ZU5 domains are found at residues 913-1068 and 1070-1216; these read FLVS…IMSR and CQDY…LSDC. Thr961 carries the phosphothreonine modification. Tyr1073 bears the Phosphotyrosine mark. Ser1082 is subject to Phosphoserine. The tract at residues 1234–1362 is UPA domain; that stretch reads TAVPYMAKFV…QHILCHLNIT (129 aa). Phosphothreonine is present on residues Thr1378 and Thr1380. Positions 1383–1881 are 55 kDa regulatory domain; the sequence is ALRYSILSES…SKDHTSTPNP (499 aa). Phosphoserine is present on residues Ser1390, Ser1392, and Ser1396. Position 1400 is a phosphothreonine (Thr1400). The Death domain maps to 1403-1487; that stretch reads AEMKMAVISE…EIVNMLEGSG (85 aa). 2 positions are modified to phosphoserine: Ser1428 and Ser1486. Residues 1486–1510 form a disordered region; sequence SGRQSRNLKPDRRHTDRDYSLSPSQ. The segment covering 1493 to 1504 has biased composition (basic and acidic residues); it reads LKPDRRHTDRDY. A phosphoserine mark is found at Ser1523 and Ser1533. Positions 1583-1613 are disordered; it reads SSLECSKAEDSDATGHEWKLEGALSEEPRGP. Positions 1588-1612 are enriched in basic and acidic residues; that stretch reads SKAEDSDATGHEWKLEGALSEEPRG. Ser1617 carries the post-translational modification Phosphoserine. Disordered regions lie at residues 1637-1703, 1718-1791, and 1840-1859; these read LLEQ…LQDW, QGSW…EAKN, and ADAA…EDPS. Basic and acidic residues predominate over residues 1642 to 1658; that stretch reads EGQRSEEKLPGSKRQDD. Residues Ser1666, Ser1671, Ser1686, Ser1690, and Ser1696 each carry the phosphoserine modification. Positions 1683 to 1694 are enriched in polar residues; that stretch reads ITHSPTVSQVTE. Composition is skewed to polar residues over residues 1718 to 1739 and 1758 to 1771; these read QGSW…STMT and SEHT…AESS. The segment covering 1772–1781 has biased composition (basic and acidic residues); sequence QADRDRRQQG.

As to quaternary structure, component of the ankyrin-1 complex in the erythrocyte, composed of ANK1, RHCE, RHAG, SLC4A1, EPB42, GYPA, GYPB and AQP1. Interacts with a number of integral membrane proteins and cytoskeletal proteins. Interacts (via N-terminus) with SPTB/spectrin (beta chain). Also interacts with TTN/titin. Isoform Mu17 interacts with OBSCN isoform 3/obscurin. Interacts with HIF1AN. Interacts (via ANK 1-5 repeats) with RHCE; this interaction mediates the primary membrane attachment site for ANK1. Interacts (via ANK 1-2 repeats) with AQP1 (via the N-terminal). Interacts (via ANK 1-13 repeats) with EPB42. Interacts directly with SLC4A1 (via the cytoplasmic domain); this interaction is mediated by the SLC4A1 Band 3-II and Band 3-III dimers. Post-translationally, regulated by phosphorylation. In terms of processing, palmitoylated. Hydroxylated by HIF1AN at several asparagine and 1 aspartate residue within ANK repeat region. Hydroxylation seems to increase the conformational stability of this region and may also modulate protein-protein interactions mediated by the ANK repeat region. Post-translationally, (Microbial infection) Probably cleaved by P.falciparum SERA6; the cleavage probably causes the disruption of the actin cytoskeleton and the rupture of the erythrocyte cell membrane releasing the merozoites. Isoform Mu17, isoform Mu18, isoform Mu19 and isoform Mu20 are expressed in skeletal muscle. Isoform Br21 is expressed in brain.

It is found in the cytoplasm. The protein resides in the cytoskeleton. Its subcellular location is the membrane. It localises to the myofibril. The protein localises to the sarcomere. It is found in the m line. The protein resides in the sarcoplasmic reticulum. Its function is as follows. Component of the ankyrin-1 complex, a multiprotein complex involved in the stability and shape of the erythrocyte membrane. Attaches integral membrane proteins to cytoskeletal elements; binds to the erythrocyte membrane protein band 4.2, to Na-K ATPase, to the lymphocyte membrane protein GP85, and to the cytoskeletal proteins fodrin, tubulin, vimentin and desmin. Erythrocyte ankyrins also link spectrin (beta chain) to the cytoplasmic domain of the erythrocytes anion exchange protein; they retain most or all of these binding functions. Together with obscurin in skeletal muscle may provide a molecular link between the sarcoplasmic reticulum and myofibrils. In Homo sapiens (Human), this protein is Ankyrin-1.